The following is a 404-amino-acid chain: L-cysteine:1D-myo-inositol 2-amino-2-deoxy-alpha-D-glucopyranoside ligase 1 (404 aa).

Cysteine 47 contributes to the Zn(2+) binding site. L-cysteinyl-5'-AMP-binding positions include 47–50 (CGIT), threonine 62, and 85–87 (NIT). The 'HIGH' region motif lies at 49-59 (ITPYDSTHLGH). The 'ERGGDP' region signature appears at 188–193 (ERGGDP). Tryptophan 228 contributes to the L-cysteinyl-5'-AMP binding site. Residue cysteine 232 coordinates Zn(2+). Residue 250-252 (GSD) coordinates L-cysteinyl-5'-AMP. Histidine 257 is a binding site for Zn(2+). Isoleucine 284 serves as a coordination point for L-cysteinyl-5'-AMP. Positions 290–294 (KMSKS) match the 'KMSKS' region motif.

This sequence belongs to the class-I aminoacyl-tRNA synthetase family. MshC subfamily. As to quaternary structure, monomer. It depends on Zn(2+) as a cofactor.

The catalysed reaction is 1D-myo-inositol 2-amino-2-deoxy-alpha-D-glucopyranoside + L-cysteine + ATP = 1D-myo-inositol 2-(L-cysteinylamino)-2-deoxy-alpha-D-glucopyranoside + AMP + diphosphate + H(+). Catalyzes the ATP-dependent condensation of GlcN-Ins and L-cysteine to form L-Cys-GlcN-Ins. This is L-cysteine:1D-myo-inositol 2-amino-2-deoxy-alpha-D-glucopyranoside ligase 1 from Corynebacterium jeikeium (strain K411).